Here is a 119-residue protein sequence, read N- to C-terminus: Holo-[acyl-carrier-protein] synthase (119 aa).

The Mg(2+) site is built by D5 and E51.

This sequence belongs to the P-Pant transferase superfamily. AcpS family. Mg(2+) serves as cofactor.

Its subcellular location is the cytoplasm. It catalyses the reaction apo-[ACP] + CoA = holo-[ACP] + adenosine 3',5'-bisphosphate + H(+). Transfers the 4'-phosphopantetheine moiety from coenzyme A to a Ser of acyl-carrier-protein. The sequence is that of Holo-[acyl-carrier-protein] synthase from Helicobacter pylori (strain G27).